The primary structure comprises 761 residues: Ribonucleoside-diphosphate reductase subunit alpha (761 aa).

Positions 5-95 (LFVTKRDGRK…IFHLRKKAYG (91 aa)) constitute an ATP-cone domain. Residues K9, 15-21 (EKINLDK), T55, and K91 each bind ATP. Position 209 (T209) interacts with GDP. An intrachain disulfide couples C225 to C462. DTTP-binding positions include 232 to 234 (DSL), R262, and R269. N437 provides a ligand contact to GDP. N437 acts as the Proton acceptor in catalysis. The active-site Cysteine radical intermediate is C439. Residues E441 and 623–625 (ETS) contribute to the GDP site. E441 acts as the Proton acceptor in catalysis.

Belongs to the ribonucleoside diphosphate reductase large chain family. Tetramer of two alpha and two beta subunits.

It carries out the reaction a 2'-deoxyribonucleoside 5'-diphosphate + [thioredoxin]-disulfide + H2O = a ribonucleoside 5'-diphosphate + [thioredoxin]-dithiol. Its activity is regulated as follows. Under complex allosteric control mediated by deoxynucleoside triphosphates and ATP binding to separate specificity and activation sites on the alpha subunit. The type of nucleotide bound at the specificity site determines substrate preference. It seems probable that ATP makes the enzyme reduce CDP and UDP, dGTP favors ADP reduction and dTTP favors GDP reduction. Stimulated by ATP and inhibited by dATP binding to the activity site. Functionally, provides the precursors necessary for DNA synthesis. Catalyzes the biosynthesis of deoxyribonucleotides from the corresponding ribonucleotides. This chain is Ribonucleoside-diphosphate reductase subunit alpha (nrdA), found in Buchnera aphidicola subsp. Acyrthosiphon pisum (strain APS) (Acyrthosiphon pisum symbiotic bacterium).